The sequence spans 173 residues: Dual-action ribosomal maturation protein DarP (173 aa).

It belongs to the DarP family.

The protein localises to the cytoplasm. Its function is as follows. Member of a network of 50S ribosomal subunit biogenesis factors which assembles along the 30S-50S interface, preventing incorrect 23S rRNA structures from forming. Promotes peptidyl transferase center (PTC) maturation. The sequence is that of Dual-action ribosomal maturation protein DarP from Pseudomonas putida (strain ATCC 700007 / DSM 6899 / JCM 31910 / BCRC 17059 / LMG 24140 / F1).